Consider the following 228-residue polypeptide: Phosphatidylserine decarboxylase proenzyme (228 aa).

The active-site Schiff-base intermediate with substrate; via pyruvic acid is the serine 197. Residue serine 197 is modified to Pyruvic acid (Ser); by autocatalysis.

The protein belongs to the phosphatidylserine decarboxylase family. PSD-A subfamily. In terms of assembly, heterodimer of a large membrane-associated beta subunit and a small pyruvoyl-containing alpha subunit. Requires pyruvate as cofactor. Is synthesized initially as an inactive proenzyme. Formation of the active enzyme involves a self-maturation process in which the active site pyruvoyl group is generated from an internal serine residue via an autocatalytic post-translational modification. Two non-identical subunits are generated from the proenzyme in this reaction, and the pyruvate is formed at the N-terminus of the alpha chain, which is derived from the carboxyl end of the proenzyme. The post-translation cleavage follows an unusual pathway, termed non-hydrolytic serinolysis, in which the side chain hydroxyl group of the serine supplies its oxygen atom to form the C-terminus of the beta chain, while the remainder of the serine residue undergoes an oxidative deamination to produce ammonia and the pyruvoyl prosthetic group on the alpha chain.

The protein resides in the cell membrane. The enzyme catalyses a 1,2-diacyl-sn-glycero-3-phospho-L-serine + H(+) = a 1,2-diacyl-sn-glycero-3-phosphoethanolamine + CO2. It participates in phospholipid metabolism; phosphatidylethanolamine biosynthesis; phosphatidylethanolamine from CDP-diacylglycerol: step 2/2. In terms of biological role, catalyzes the formation of phosphatidylethanolamine (PtdEtn) from phosphatidylserine (PtdSer). This chain is Phosphatidylserine decarboxylase proenzyme, found in Bacteroides fragilis (strain ATCC 25285 / DSM 2151 / CCUG 4856 / JCM 11019 / LMG 10263 / NCTC 9343 / Onslow / VPI 2553 / EN-2).